The chain runs to 172 residues: Adenine phosphoribosyltransferase (172 aa).

This sequence belongs to the purine/pyrimidine phosphoribosyltransferase family. Homodimer.

It is found in the cytoplasm. It carries out the reaction AMP + diphosphate = 5-phospho-alpha-D-ribose 1-diphosphate + adenine. It participates in purine metabolism; AMP biosynthesis via salvage pathway; AMP from adenine: step 1/1. Its function is as follows. Catalyzes a salvage reaction resulting in the formation of AMP, that is energically less costly than de novo synthesis. The protein is Adenine phosphoribosyltransferase of Lactiplantibacillus plantarum (strain ATCC BAA-793 / NCIMB 8826 / WCFS1) (Lactobacillus plantarum).